We begin with the raw amino-acid sequence, 516 residues long: Nondiscriminating glutamyl-tRNA synthetase EARS2, mitochondrial (516 aa).

The transit peptide at 1-39 (MRPAFIRGKWLSRTLELATGLGRRTCSSRESGREVRVRF) directs the protein to the mitochondrion. 38–40 (RFA) lines the L-glutamate pocket. A 'HIGH' region motif is present at residues 43-51 (PTGFLHLGG). Histidine 48 provides a ligand contact to ATP. L-glutamate is bound by residues glutamate 74, 226 to 230 (YHLAN), and arginine 244. Residues glutamate 247 and 282-286 (KLSKR) each bind ATP. Positions 282–286 (KLSKR) match the 'KMSKS' region motif.

The protein belongs to the class-I aminoacyl-tRNA synthetase family. Glutamate--tRNA ligase type 1 subfamily.

Its subcellular location is the mitochondrion matrix. It catalyses the reaction tRNA(Glx) + L-glutamate + ATP = L-glutamyl-tRNA(Glx) + AMP + diphosphate. It carries out the reaction tRNA(Glu) + L-glutamate + ATP = L-glutamyl-tRNA(Glu) + AMP + diphosphate. The enzyme catalyses tRNA(Gln) + L-glutamate + ATP = L-glutamyl-tRNA(Gln) + AMP + diphosphate. Functionally, non-discriminating glutamyl-tRNA synthetase that catalyzes aminoacylation of both mitochondrial tRNA(Glu) and tRNA(Gln) and participates in RNA aminoacylation for mitochondrial protein translation. Attachs glutamate to tRNA(Glu) or tRNA(Gln) in a two-step reaction: glutamate is first activated by ATP to form Glu-AMP and then transferred to the acceptor end of tRNA(Glu) or tRNA(Gln). The protein is Nondiscriminating glutamyl-tRNA synthetase EARS2, mitochondrial of Xenopus tropicalis (Western clawed frog).